A 198-amino-acid polypeptide reads, in one-letter code: Probable chemoreceptor glutamine deamidase CheD (198 aa).

Belongs to the CheD family.

The enzyme catalyses L-glutaminyl-[protein] + H2O = L-glutamyl-[protein] + NH4(+). Its function is as follows. Probably deamidates glutamine residues to glutamate on methyl-accepting chemotaxis receptors (MCPs), playing an important role in chemotaxis. The protein is Probable chemoreceptor glutamine deamidase CheD of Xanthomonas campestris pv. campestris (strain 8004).